Reading from the N-terminus, the 601-residue chain is MTDTPLSLIRNFSIIAHIDHGKSTLADRLIQACGALTAREMTNQVLDNMELERERGITIKAQTVRLSYPAKDGKTYVLNLMDTPGHVDFAYEVSRSLAACEGSLLVVDASQGVEAQTLANVYQAIDANHEIVPVLNKVDLPAAEPERVKAQIEEVIGIPADDAVEISAKTGLNIEGVLEALVTRLPPPVGDESKPLQALLVDSWYDPYLGVIILVRIKEGRLRKGSRIRMMSNGAVYHVDQVGVFAPRMVPVDDLGPGEMGYINAAIKTVADCNVGDTITDDRHPAERALAGFKPSIPVVWCGLYPIDADDFEKLRDSLSKLRLNDASFHYEAETSAALGFGFRCGFLGLLHLEIIQERLSREFNLDLIATAPSVVYRLYRTNGGMEELHNPADMPDGSVVEKIEEPWITATIMVPDDYLGAVLTLCSERRGIQKDLTYVGTRAMAVYRLPLNEVVFDFYDRLKSVSRGYASFDYQMDGYEESDLVRISILVNQEPVDALAFIAHRSAAESRGRSICAKLKELIPRQLFKIAIQAAIGSRVIARETIGALSKDVTAKCYGGDISRKRKLLEKQKEGKKRMRQFGKVEIPQSAFLAALKMDH.

Residues 7–189 (SLIRNFSIIA…ALVTRLPPPV (183 aa)) enclose the tr-type G domain. GTP contacts are provided by residues 19–24 (DHGKST) and 136–139 (NKVD).

It belongs to the TRAFAC class translation factor GTPase superfamily. Classic translation factor GTPase family. LepA subfamily.

Its subcellular location is the cell inner membrane. The enzyme catalyses GTP + H2O = GDP + phosphate + H(+). Its function is as follows. Required for accurate and efficient protein synthesis under certain stress conditions. May act as a fidelity factor of the translation reaction, by catalyzing a one-codon backward translocation of tRNAs on improperly translocated ribosomes. Back-translocation proceeds from a post-translocation (POST) complex to a pre-translocation (PRE) complex, thus giving elongation factor G a second chance to translocate the tRNAs correctly. Binds to ribosomes in a GTP-dependent manner. This Gluconacetobacter diazotrophicus (strain ATCC 49037 / DSM 5601 / CCUG 37298 / CIP 103539 / LMG 7603 / PAl5) protein is Elongation factor 4.